Consider the following 405-residue polypeptide: Glyceraldehyde-3-phosphate dehydrogenase A, chloroplastic (405 aa).

The transit peptide at 1–68 directs the protein to the chloroplast; that stretch reads MASATFSVAK…GHKKSLVVEA (68 aa). NADP(+) contacts are provided by residues 80 to 81, D104, and R149; that span reads RI. D-glyceraldehyde 3-phosphate-binding positions include 221 to 223, T252, R267, 280 to 281, and R303; these read SCT and TG. C222 (nucleophile) is an active-site residue. N385 contributes to the NADP(+) binding site.

It belongs to the glyceraldehyde-3-phosphate dehydrogenase family. Tetramer of either four A chains (GAPDH 2) or two A and two B chains (GAPDH 1).

The protein resides in the plastid. The protein localises to the chloroplast. The enzyme catalyses D-glyceraldehyde 3-phosphate + phosphate + NADP(+) = (2R)-3-phospho-glyceroyl phosphate + NADPH + H(+). It participates in carbohydrate biosynthesis; Calvin cycle. The protein is Glyceraldehyde-3-phosphate dehydrogenase A, chloroplastic (GAPA) of Pisum sativum (Garden pea).